A 422-amino-acid chain; its full sequence is GTPase Obg (422 aa).

The 158-residue stretch at 4 to 161 folds into the Obg domain; sequence LHFVDEAFNE…FKIKTELKVL (158 aa). Residues 162-327 form the OBG-type G domain; the sequence is ADIGLLGFPS…LKYEMSSLLQ (166 aa). GTP is bound by residues 168–175, 193–197, 214–217, 281–284, and 308–310; these read GFPSVGKS, FTTIK, DLPG, NKMD, and SLV. Residues S175 and T195 each contribute to the Mg(2+) site. Residues 345-422 enclose the OCT domain; that stretch reads TLPDNQNTIS…KICDRLFYFL (78 aa).

Belongs to the TRAFAC class OBG-HflX-like GTPase superfamily. OBG GTPase family. Monomer. The cofactor is Mg(2+).

It is found in the cytoplasm. Functionally, an essential GTPase which binds GTP, GDP and possibly (p)ppGpp with moderate affinity, with high nucleotide exchange rates and a fairly low GTP hydrolysis rate. Plays a role in control of the cell cycle, stress response, ribosome biogenesis and in those bacteria that undergo differentiation, in morphogenesis control. This chain is GTPase Obg, found in Onion yellows phytoplasma (strain OY-M).